Consider the following 199-residue polypeptide: GTP cyclohydrolase-2 (199 aa).

50 to 54 contributes to the GTP binding site; it reads RIHSE. Residues C55, C66, and C68 each contribute to the Zn(2+) site. GTP is bound by residues Q71, 93–95, and T115; that span reads EGR. D127 (proton acceptor) is an active-site residue. R129 functions as the Nucleophile in the catalytic mechanism. GTP is bound by residues T150 and K155.

The protein belongs to the GTP cyclohydrolase II family. Homodimer. Requires Zn(2+) as cofactor.

The catalysed reaction is GTP + 4 H2O = 2,5-diamino-6-hydroxy-4-(5-phosphoribosylamino)-pyrimidine + formate + 2 phosphate + 3 H(+). The protein operates within cofactor biosynthesis; riboflavin biosynthesis; 5-amino-6-(D-ribitylamino)uracil from GTP: step 1/4. In terms of biological role, catalyzes the conversion of GTP to 2,5-diamino-6-ribosylamino-4(3H)-pyrimidinone 5'-phosphate (DARP), formate and pyrophosphate. The polypeptide is GTP cyclohydrolase-2 (Buchnera aphidicola subsp. Baizongia pistaciae (strain Bp)).